The chain runs to 409 residues: NADH-ubiquinone oxidoreductase chain 4 (409 aa).

13 helical membrane-spanning segments follow: residues 10 to 30 (LWLF…FLIF), 44 to 64 (SYSF…IVIS), 76 to 96 (ILVF…LYMF), 98 to 118 (ELSM…IEKI), 120 to 140 (SSYY…FVYF), 160 to 180 (FFIL…HLWL), 194 to 214 (LLAG…LGSL), 221 to 241 (VWIL…VFQS), 245 to 265 (ALAA…LVFI), 271 to 291 (ISSV…FYLI), 305 to 325 (FMSS…VVFL), 353 to 373 (MFVM…FLIT), and 389 to 409 (VGFS…SVFY).

The protein belongs to the complex I subunit 4 family.

It localises to the mitochondrion membrane. It carries out the reaction a ubiquinone + NADH + 5 H(+)(in) = a ubiquinol + NAD(+) + 4 H(+)(out). Functionally, core subunit of the mitochondrial membrane respiratory chain NADH dehydrogenase (Complex I) that is believed to belong to the minimal assembly required for catalysis. Complex I functions in the transfer of electrons from NADH to the respiratory chain. The immediate electron acceptor for the enzyme is believed to be ubiquinone. This is NADH-ubiquinone oxidoreductase chain 4 from Caenorhabditis elegans.